We begin with the raw amino-acid sequence, 126 residues long: uncharacterized protein (126 aa).

The interval 1 to 46 (MREEEAAAVVTVPQAGRDGEQPGPPAGLGCAAVRGEPGGGGPQESR) is disordered.

It is found in the cytoplasm. The protein localises to the cytoskeleton. Its subcellular location is the cilium basal body. This is an uncharacterized protein from Bos taurus (Bovine).